A 363-amino-acid chain; its full sequence is MELQRIFPLYTATGAARKLTPEAVQRLCDALTLDMGLWKSILTDPRVKIMRSTAFITLRIAPFIPLQTDTTNIAVVVATIYITRPRQMNLPPKTFHVIVNFNYEVSYAMTATLRIYPVENIDHVFGATFKNPIAYPLPTSIPDPRADPTPADLTPTPNLSNYLQPPRLPKNPYACKVISPGVWWSDERRRLYVLAMEPNLIGLCPAGWHARILGSVLNRLLSHADGCDECNHRVHVGALYALPHVTNHAEGCVCWAPCMWRKAGQRELKVEVDIGATQVLFVDVTTCIRITSTKNPRITANLGDVIAGTNASGLSVPVNSSGWQLYMFGETLSRAIINGCGLLQRICFPETQRLSGEPEPTTT.

The protein belongs to the herpesviridae cytoplasmic envelopment protein 2 family. Interacts with cytoplasmic envelopment protein 3 and with the capsid.

It localises to the virion tegument. It is found in the host cytoplasm. The protein localises to the host nucleus. In terms of biological role, plays a critical role in cytoplasmic virus egress. Participates in the final step of tegumentation and envelope acquisition within the host cytoplasm by directly interacting with the capsid. Upon virion binding to target cell, a signaling cascade is triggered to disrupt the interaction with the capsid, thereby preparing capsid uncoating. The polypeptide is Cytoplasmic envelopment protein 2 (44) (Varicella-zoster virus (strain Dumas) (HHV-3)).